A 309-amino-acid polypeptide reads, in one-letter code: RHOMBOID-like protein 5 (309 aa).

The next 7 helical transmembrane spans lie at 27-47 (IPVP…FVTF), 113-133 (IWLH…MCIG), 140-160 (FGFM…SLVS), 170-190 (VSVG…SELI), 200-220 (CTAL…GFLP), 222-242 (VDNS…FVLL), and 274-294 (IFRF…YTKL). S175 functions as the Nucleophile in the catalytic mechanism. H227 serves as the catalytic Charge relay system.

It belongs to the peptidase S54 family.

The protein resides in the membrane. The catalysed reaction is Cleaves type-1 transmembrane domains using a catalytic dyad composed of serine and histidine that are contributed by different transmembrane domains.. In terms of biological role, probable rhomboid-type serine protease that catalyzes intramembrane proteolysis. May function in reproductive organs maturation. This chain is RHOMBOID-like protein 5, found in Arabidopsis thaliana (Mouse-ear cress).